Here is a 363-residue protein sequence, read N- to C-terminus: Outer membrane porin F (363 aa).

An N-terminal signal peptide occupies residues 1 to 22 (MMKRKILAAVIPALLAAATANA).

The protein belongs to the Gram-negative porin family. As to quaternary structure, homotrimer. Forms mixed heterotrimers with OmpC and with PhoE; other mixed heterotrimers with other porins are also probable.

Its subcellular location is the cell outer membrane. Its function is as follows. Forms pores that allow passive diffusion of small molecules across the outer membrane. The polypeptide is Outer membrane porin F (Salmonella typhimurium (strain SL1344)).